The sequence spans 560 residues: MGDNLKKRSSMTTDGDNRAPNRAMLRAVGFTDEDFHKPMIGIASTWSEITPCNIHINKLAEKVKEGVREAGGVPQIYGTITVSDGIMMGHEGMHFSLPSREVIADSIEIVSNAMRHDGVIAIGGCDKNMPGCLMALCRIDAPSIFVYGGTILPGNCDGQDVDIVSIFEAVGKFNAGKISREEFIRIEQNAIPGAGSCGGMYTANTMSSAIEALGMSLPGSASMPAVSSRKANDCYEAGKALINLIQKGITPKQILTKKAFENAITVVLVLGGSTNAVLHLIAIAKEIGVGLTLDDFDRISKKTPHLADLKPGGKYAMTDLDKVGGVHGVMKYLLKEGMLHGDCLTVTGKTIAENLKDMPDLVPNQTIVRKKSEALHPSGPLVILKGNLAPDGAVAKISGLKKISITGPAKVFESEDDCFNAIMTDKIKPGDVIIIRYEGPKGGPGMREMLAVTSALVGKGLGEDVGLMTDGRFSGGTHGLVVGHISPEAFDGGPIAIIQNGDKVTIDSSKNLLQVEISQEEIDKRLKSWKPIEPRYKTGVLAKYVKLVQSATNGAITNLL.

The disordered stretch occupies residues 1–20; that stretch reads MGDNLKKRSSMTTDGDNRAP. Position 52 (cysteine 52) interacts with [2Fe-2S] cluster. Aspartate 84 is a Mg(2+) binding site. Cysteine 125 lines the [2Fe-2S] cluster pocket. Mg(2+) contacts are provided by aspartate 126 and lysine 127. An N6-carboxylysine modification is found at lysine 127. Cysteine 197 provides a ligand contact to [2Fe-2S] cluster. Residue glutamate 448 participates in Mg(2+) binding. The active-site Proton acceptor is the serine 474.

Belongs to the IlvD/Edd family. In terms of assembly, homodimer. It depends on [2Fe-2S] cluster as a cofactor. Mg(2+) serves as cofactor.

It catalyses the reaction (2R)-2,3-dihydroxy-3-methylbutanoate = 3-methyl-2-oxobutanoate + H2O. The catalysed reaction is (2R,3R)-2,3-dihydroxy-3-methylpentanoate = (S)-3-methyl-2-oxopentanoate + H2O. It functions in the pathway amino-acid biosynthesis; L-isoleucine biosynthesis; L-isoleucine from 2-oxobutanoate: step 3/4. The protein operates within amino-acid biosynthesis; L-valine biosynthesis; L-valine from pyruvate: step 3/4. Its function is as follows. Functions in the biosynthesis of branched-chain amino acids. Catalyzes the dehydration of (2R,3R)-2,3-dihydroxy-3-methylpentanoate (2,3-dihydroxy-3-methylvalerate) into 2-oxo-3-methylpentanoate (2-oxo-3-methylvalerate) and of (2R)-2,3-dihydroxy-3-methylbutanoate (2,3-dihydroxyisovalerate) into 2-oxo-3-methylbutanoate (2-oxoisovalerate), the penultimate precursor to L-isoleucine and L-valine, respectively. The polypeptide is Dihydroxy-acid dehydratase (Leptospira interrogans serogroup Icterohaemorrhagiae serovar copenhageni (strain Fiocruz L1-130)).